The primary structure comprises 152 residues: Sec-independent protein translocase protein TatB (152 aa).

The chain crosses the membrane as a helical span at residues M1 to G21. The segment covering H98–P115 has biased composition (low complexity). A disordered region spans residues H98–P152. Over residues A116–T127 the composition is skewed to pro residues. The span at A128–P142 shows a compositional bias: low complexity.

The protein belongs to the TatB family. In terms of assembly, the Tat system comprises two distinct complexes: a TatABC complex, containing multiple copies of TatA, TatB and TatC subunits, and a separate TatA complex, containing only TatA subunits. Substrates initially bind to the TatABC complex, which probably triggers association of the separate TatA complex to form the active translocon.

The protein localises to the cell inner membrane. Part of the twin-arginine translocation (Tat) system that transports large folded proteins containing a characteristic twin-arginine motif in their signal peptide across membranes. Together with TatC, TatB is part of a receptor directly interacting with Tat signal peptides. TatB may form an oligomeric binding site that transiently accommodates folded Tat precursor proteins before their translocation. In Pseudomonas fluorescens (strain ATCC BAA-477 / NRRL B-23932 / Pf-5), this protein is Sec-independent protein translocase protein TatB.